The chain runs to 331 residues: Geranylgeranyl transferase type-2 subunit beta (331 aa).

Gly2 is subject to N-acetylglycine. Thr3 carries the post-translational modification Phosphothreonine. PFTB repeat units lie at residues 20-61, 68-109, 116-157, 164-205, 212-253, and 260-302; these read LEKH…DLMG, REEI…TLYD, VNKV…ALLG, VEKA…AITS, SDLL…KIIG, and REKL…SLLG. Residue 190–192 coordinates geranylgeranyl diphosphate; the sequence is HAG. Asp238 and Cys240 together coordinate Zn(2+). 241–244 serves as a coordination point for geranylgeranyl diphosphate; it reads YSWW. His290 contributes to the Zn(2+) binding site.

Belongs to the protein prenyltransferase subunit beta family. In terms of assembly, heterotrimer composed of RABGGTA, RABGGTB and CHM; within this trimer, RABGGTA and RABGGTB form the catalytic component B, while CHM (component A) mediates peptide substrate binding. The Rab GGTase dimer (RGGT) interacts with CHM (component A) prior to Rab protein binding; the association is stabilized by geranylgeranyl pyrophosphate (GGpp). The CHM:RGGT:Rab complex is destabilized by GGpp. Interaction of RABGGTB with prenylated PTP4A2 precludes its association with RABGGTA and inhibits enzyme activity. Interacts with CHODL. Interacts with non-phosphorylated form of RAB8A; phosphorylation of RAB8A at 'Thr-72' disrupts this interaction. Zn(2+) serves as cofactor.

The enzyme catalyses geranylgeranyl diphosphate + L-cysteinyl-[protein] = S-geranylgeranyl-L-cysteinyl-[protein] + diphosphate. Its activity is regulated as follows. The enzymatic reaction requires the aid of a Rab escort protein (also called component A). Functionally, catalyzes the transfer of a geranylgeranyl moiety from geranylgeranyl diphosphate to both cysteines of Rab proteins with the C-terminal sequence -XXCC, -XCXC and -CCXX, such as RAB1A, RAB3A, RAB5A and RAB7A. This Homo sapiens (Human) protein is Geranylgeranyl transferase type-2 subunit beta (RABGGTB).